Consider the following 582-residue polypeptide: MITRMSELFLRTLRDDPADAEVPSHKLLIRAGYIRPVGPGLYSWLPLGLRVLRNIERVIREEMNAIGGQEILFPALLPRAPYETTNRWTEYGDGVFRLEDRRGNDYLLGPTHEELFTLTVKGEYNSYKDFPLTLYQIQIKYRDEARPRAGILRAREFVMKDSYSFDIDSGGLKAAYHAHREAYQRIFDRLRVRYVIVSAVSGAMGGSASEEFLAESPVGEDTFVRCVESGYAANVEAVVTARPESLPIDGQPDAVVHDTGETPTIATLVAWANEAGLGREVSAADTLKNVLMKIRQPGGEWELLAIGVPGDREIDEKRLAAALDPAEYVFLDDDDFGKYPFLVKGYIGPKALRSNDVRYLLDPRVVDGTSWITGADEPGRHVVGLVAGRDFTADGTIEAAEVREGDPAPDGAGQLVMARGIEIGHIFQLGRKYTDAFTADVLGEDGKPVRLTMGSYGIGVSRLVAVIAEQHHDNLGLRWPAEIAPFGVHLVIANKDAEARAGAIGLAGELDGLGVEVLLDDRQASPGVKFKDAELLGMPWVVVVGRGWADGVVELRDRFGGQTRELTVGDSLATDIAAAISG.

It belongs to the class-II aminoacyl-tRNA synthetase family. ProS type 1 subfamily. As to quaternary structure, homodimer.

It localises to the cytoplasm. The catalysed reaction is tRNA(Pro) + L-proline + ATP = L-prolyl-tRNA(Pro) + AMP + diphosphate. Functionally, catalyzes the attachment of proline to tRNA(Pro) in a two-step reaction: proline is first activated by ATP to form Pro-AMP and then transferred to the acceptor end of tRNA(Pro). As ProRS can inadvertently accommodate and process non-cognate amino acids such as alanine and cysteine, to avoid such errors it has two additional distinct editing activities against alanine. One activity is designated as 'pretransfer' editing and involves the tRNA(Pro)-independent hydrolysis of activated Ala-AMP. The other activity is designated 'posttransfer' editing and involves deacylation of mischarged Ala-tRNA(Pro). The misacylated Cys-tRNA(Pro) is not edited by ProRS. This Mycobacterium ulcerans (strain Agy99) protein is Proline--tRNA ligase.